Here is a 489-residue protein sequence, read N- to C-terminus: Envelope glycoprotein C homolog (489 aa).

The signal sequence occupies residues 1–32; the sequence is MVSNMRVLRVLRLTGWVGIFLVLSLQQTSCAG. Residues 33–455 lie on the Virion surface side of the membrane; it reads LPHNVDTHHI…YYDATPSARG (423 aa). The disordered stretch occupies residues 59-94; the sequence is EVPNSPTTELSTTVATKTAVPTTESTSSSEAHRNSS. Residues 60–69 are compositionally biased toward polar residues; that stretch reads VPNSPTTELS. Residues 70–81 are compositionally biased toward low complexity; sequence TTVATKTAVPTT. N-linked (GlcNAc...) asparagine; by host glycans are attached at residues Asn92, Asn112, Asn204, Asn346, and Asn392. An Ig-like domain is found at 250–348; sequence PASVDVLAPP…GDMISTSNAT (99 aa). The helical transmembrane segment at 456 to 486 threads the bilayer; sequence MPMIVTITAVLGLALFLGIGIIITALCFYLP. The Cytoplasmic segment spans residues 487 to 489; it reads GRN.

The protein belongs to the herpesviridae glycoprotein C family.

It is found in the virion membrane. In Gallus gallus (Chicken), this protein is Envelope glycoprotein C homolog (gC).